A 266-amino-acid polypeptide reads, in one-letter code: uncharacterized protein (266 aa).

Residues 13–33 (IIGLMLIIFAGILFYAYILQH) traverse the membrane as a helical segment.

Belongs to the LicD transferase family.

The protein localises to the membrane. This is an uncharacterized protein from Rickettsia prowazekii (strain Madrid E).